The sequence spans 722 residues: 1,4-alpha-glucan branching enzyme GlgB (722 aa).

The active-site Nucleophile is the Asp401. Glu454 acts as the Proton donor in catalysis.

Belongs to the glycosyl hydrolase 13 family. GlgB subfamily. In terms of assembly, monomer.

It catalyses the reaction Transfers a segment of a (1-&gt;4)-alpha-D-glucan chain to a primary hydroxy group in a similar glucan chain.. It participates in glycan biosynthesis; glycogen biosynthesis. Functionally, catalyzes the formation of the alpha-1,6-glucosidic linkages in glycogen by scission of a 1,4-alpha-linked oligosaccharide from growing alpha-1,4-glucan chains and the subsequent attachment of the oligosaccharide to the alpha-1,6 position. The polypeptide is 1,4-alpha-glucan branching enzyme GlgB (Rubrobacter xylanophilus (strain DSM 9941 / JCM 11954 / NBRC 16129 / PRD-1)).